The following is a 188-amino-acid chain: Elongation factor P (188 aa).

N6-(3,6-diaminohexanoyl)-5-hydroxylysine is present on lysine 34.

The protein belongs to the elongation factor P family. Post-translationally, may be beta-lysylated on the epsilon-amino group of Lys-34 by the combined action of EpmA and EpmB, and then hydroxylated on the C5 position of the same residue by EpmC (if this protein is present). Lysylation is critical for the stimulatory effect of EF-P on peptide-bond formation. The lysylation moiety may extend toward the peptidyltransferase center and stabilize the terminal 3-CCA end of the tRNA. Hydroxylation of the C5 position on Lys-34 may allow additional potential stabilizing hydrogen-bond interactions with the P-tRNA.

Its subcellular location is the cytoplasm. It participates in protein biosynthesis; polypeptide chain elongation. Its function is as follows. Involved in peptide bond synthesis. Alleviates ribosome stalling that occurs when 3 or more consecutive Pro residues or the sequence PPG is present in a protein, possibly by augmenting the peptidyl transferase activity of the ribosome. Modification of Lys-34 is required for alleviation. This chain is Elongation factor P, found in Glaesserella parasuis serovar 5 (strain SH0165) (Haemophilus parasuis).